Reading from the N-terminus, the 646-residue chain is Cysteine-rich receptor-like protein kinase 37 (646 aa).

The signal sequence occupies residues 1–26 (MGKSCVVTSSFSLLLLFLQTLKYVHA). Gnk2-homologous domains lie at 27-132 (GFIC…NHST) and 142-252 (TINP…LYPY). The Extracellular portion of the chain corresponds to 27 to 287 (GFICYGDFFN…RDEKSFQGSN (261 aa)). Residues Asn62, Asn129, Asn169, and Asn180 are each glycosylated (N-linked (GlcNAc...) asparagine). Residues 288–308 (IAIIVVPSVINLIIFVVLIFS) form a helical membrane-spanning segment. Over 309 to 646 (WKRKQSHTII…LTRPSLSLGH (338 aa)) the chain is Cytoplasmic. Residues 345–626 (FSLENKLGQG…LFWLERHATI (282 aa)) form the Protein kinase domain. ATP is bound by residues 351-359 (LGQGGFGSV) and Lys373. Tyr418 is modified (phosphotyrosine). The active-site Proton acceptor is the Asp470. Phosphoserine is present on Ser474. Phosphothreonine is present on Thr510. Tyr518 bears the Phosphotyrosine mark.

Belongs to the protein kinase superfamily. Ser/Thr protein kinase family. CRK subfamily.

It is found in the membrane. The enzyme catalyses L-seryl-[protein] + ATP = O-phospho-L-seryl-[protein] + ADP + H(+). The catalysed reaction is L-threonyl-[protein] + ATP = O-phospho-L-threonyl-[protein] + ADP + H(+). The sequence is that of Cysteine-rich receptor-like protein kinase 37 (CRK37) from Arabidopsis thaliana (Mouse-ear cress).